A 216-amino-acid chain; its full sequence is Potassium-transporting ATPase KdpC subunit (216 aa).

A helical transmembrane segment spans residues 12–32; the sequence is LLGVSLLVFGLLYQGSLMAIG. The span at 197-207 shows a compositional bias: polar residues; it reads QNETDQNSDMN. The tract at residues 197-216 is disordered; the sequence is QNETDQNSDMNASEIANGDH.

Belongs to the KdpC family. The system is composed of three essential subunits: KdpA, KdpB and KdpC. The complex also contains KdpF, a small non-essential subunit.

It is found in the cell membrane. In terms of biological role, part of the high-affinity ATP-driven potassium transport (or Kdp) system, which catalyzes the hydrolysis of ATP coupled with the electrogenic transport of potassium into the cytoplasm. This subunit acts as a catalytic chaperone that increases the ATP-binding affinity of the ATP-hydrolyzing subunit KdpB by the formation of a transient KdpB/KdpC/ATP ternary complex. The Kdp system is essential for growth under K(+) limitation, and for survival under desiccation and salt crystal inclusion. This is Potassium-transporting ATPase KdpC subunit from Halobacterium salinarum (strain ATCC 29341 / DSM 671 / R1).